Consider the following 244-residue polypeptide: Cell adhesion molecule CEACAM4 (244 aa).

Residues 1-35 form the signal peptide; it reads MGPPSAAPRGGHRPWQGLLITASLLTFWHPPTTVQ. One can recognise an Ig-like V-type domain in the interval 36–139; that stretch reads FTIEALPSSA…DSDQATGQLH (104 aa). The Extracellular segment spans residues 36 to 155; it reads FTIEALPSSA…PGLPVGAVAG (120 aa). N-linked (GlcNAc...) asparagine glycans are attached at residues Asn-57, Asn-104, Asn-111, and Asn-126. A helical membrane pass occupies residues 156–176; the sequence is IVTGVLVGVALVAALVCFLLL. Residues 177 to 244 lie on the Cytoplasmic side of the membrane; that stretch reads SRTGRASIQR…QIDHKADVVS (68 aa). The tract at residues 186–215 is disordered; sequence RDLREQPPPASTPGHGPSHRSTFSAPLPSP. An ITAM motif is present at residues 222-236; it reads YEELLYSDANIYCQI.

It belongs to the immunoglobulin superfamily. CEA family. Interacts through its phosphorylated ITAM domain with the SH2 domain-containing cytoplasmic proteins involved in signaling processes during phagocytosis. N-glycosylated. Post-translationally, the cytoplasmic ITAM-like sequence becomes tyrosine phosphorylated by SRC family PTKs upon ligand-mediated receptor clustering and allows to initiate phagocytosis of bound ligand. As to expression, granulocytes.

Its subcellular location is the membrane. In terms of biological role, granulocyte orphan receptor that acts as an trigger efficient phagocytosis of attached particles. This is Cell adhesion molecule CEACAM4 from Homo sapiens (Human).